Consider the following 319-residue polypeptide: HPr kinase/phosphorylase (319 aa).

Active-site residues include H144 and K165. ATP is bound at residue 159–166 (GKSGIGKS). A Mg(2+)-binding site is contributed by S166. D183 acts as the Proton acceptor; for phosphorylation activity. Proton donor; for dephosphorylation activity in catalysis. Residues 207-216 (MEIRGLGVIN) form an important for the catalytic mechanism of both phosphorylation and dephosphorylation region. E208 contacts Mg(2+). The active site involves R249. Residues 270 to 275 (PVRPGR) are important for the catalytic mechanism of dephosphorylation.

The protein belongs to the HPrK/P family. As to quaternary structure, homohexamer. It depends on Mg(2+) as a cofactor.

It carries out the reaction [HPr protein]-L-serine + ATP = [HPr protein]-O-phospho-L-serine + ADP + H(+). The catalysed reaction is [HPr protein]-O-phospho-L-serine + phosphate + H(+) = [HPr protein]-L-serine + diphosphate. Catalyzes the ATP- as well as the pyrophosphate-dependent phosphorylation of a specific serine residue in HPr, a phosphocarrier protein of the phosphoenolpyruvate-dependent sugar phosphotransferase system (PTS). HprK/P also catalyzes the pyrophosphate-producing, inorganic phosphate-dependent dephosphorylation (phosphorolysis) of seryl-phosphorylated HPr (P-Ser-HPr). The sequence is that of HPr kinase/phosphorylase from Geobacter sulfurreducens (strain ATCC 51573 / DSM 12127 / PCA).